A 442-amino-acid polypeptide reads, in one-letter code: Cytokine receptor-like factor 3 (442 aa).

Residues 10-46 adopt a coiled-coil conformation; sequence EVLLQEARENVEAAQSYRRELGQRLQGLREAQRQIKE. The 94-residue stretch at 181–274 folds into the Fibronectin type-III domain; it reads PPVQIEELIE…PQTGHSTLVP (94 aa).

This sequence belongs to the cytokine receptor-like factor 3 family.

It localises to the cytoplasm. Functionally, may play a role in the negative regulation of cell cycle progression. This is Cytokine receptor-like factor 3 (Crlf3) from Mus musculus (Mouse).